The sequence spans 208 residues: 23 kDa protein (208 aa).

The polypeptide is 23 kDa protein (Pea early browning virus).